We begin with the raw amino-acid sequence, 443 residues long: Ribosomal protein uS12 methylthiotransferase RimO (443 aa).

Residues 6-116 enclose the MTTase N-terminal domain; the sequence is PRVGMISLGC…VVNAVHDVVP (111 aa). [4Fe-4S] cluster is bound by residues Cys15, Cys51, Cys80, Cys149, Cys153, and Cys156. In terms of domain architecture, Radical SAM core spans 135-373; that stretch reads LTPRHYAYLK…MAHQQAISAA (239 aa). Residues 376-443 enclose the TRAM domain; that stretch reads QMKIGKEIEV…DEYDLWAEML (68 aa).

This sequence belongs to the methylthiotransferase family. RimO subfamily. [4Fe-4S] cluster serves as cofactor.

The protein resides in the cytoplasm. It catalyses the reaction L-aspartate(89)-[ribosomal protein uS12]-hydrogen + (sulfur carrier)-SH + AH2 + 2 S-adenosyl-L-methionine = 3-methylsulfanyl-L-aspartate(89)-[ribosomal protein uS12]-hydrogen + (sulfur carrier)-H + 5'-deoxyadenosine + L-methionine + A + S-adenosyl-L-homocysteine + 2 H(+). In terms of biological role, catalyzes the methylthiolation of an aspartic acid residue of ribosomal protein uS12. The sequence is that of Ribosomal protein uS12 methylthiotransferase RimO from Pseudomonas syringae pv. tomato (strain ATCC BAA-871 / DC3000).